The primary structure comprises 257 residues: Hydroxyacylglutathione hydrolase (257 aa).

Zn(2+)-binding residues include histidine 54, histidine 56, aspartate 58, histidine 59, histidine 109, aspartate 129, and histidine 167.

The protein belongs to the metallo-beta-lactamase superfamily. Glyoxalase II family. In terms of assembly, monomer. Requires Zn(2+) as cofactor.

It catalyses the reaction an S-(2-hydroxyacyl)glutathione + H2O = a 2-hydroxy carboxylate + glutathione + H(+). The protein operates within secondary metabolite metabolism; methylglyoxal degradation; (R)-lactate from methylglyoxal: step 2/2. Its function is as follows. Thiolesterase that catalyzes the hydrolysis of S-D-lactoyl-glutathione to form glutathione and D-lactic acid. The polypeptide is Hydroxyacylglutathione hydrolase (Marinomonas sp. (strain MWYL1)).